The primary structure comprises 455 residues: ATP-dependent protease ATPase subunit HslU (455 aa).

ATP is bound by residues Ile19 and 61 to 66 (GVGKTE). A disordered region spans residues 144–163 (ESKVGFANEPAEDAASKKEK). Residues Asp268, Glu333, and Arg405 each coordinate ATP.

This sequence belongs to the ClpX chaperone family. HslU subfamily. As to quaternary structure, a double ring-shaped homohexamer of HslV is capped on each side by a ring-shaped HslU homohexamer. The assembly of the HslU/HslV complex is dependent on binding of ATP.

It localises to the cytoplasm. Functionally, ATPase subunit of a proteasome-like degradation complex; this subunit has chaperone activity. The binding of ATP and its subsequent hydrolysis by HslU are essential for unfolding of protein substrates subsequently hydrolyzed by HslV. HslU recognizes the N-terminal part of its protein substrates and unfolds these before they are guided to HslV for hydrolysis. The sequence is that of ATP-dependent protease ATPase subunit HslU from Francisella tularensis subsp. novicida (strain U112).